A 697-amino-acid polypeptide reads, in one-letter code: Probable glutamine--tRNA ligase (697 aa).

The short motif at 204 to 214 is the 'HIGH' region element; sequence PEPNGILHIGH. ATP-binding positions include 205 to 207 and 211 to 217; these read EPN and HIGHAKA. L-glutamine is bound by residues Asp237 and Tyr386. ATP contacts are provided by residues Thr405, 434 to 435, and 442 to 444; these read RL and LSK. Positions 441–445 match the 'KMSKS' region motif; it reads VLSKR.

The protein belongs to the class-I aminoacyl-tRNA synthetase family.

The enzyme catalyses tRNA(Gln) + L-glutamine + ATP = L-glutaminyl-tRNA(Gln) + AMP + diphosphate. This is Probable glutamine--tRNA ligase from Encephalitozoon cuniculi (strain GB-M1) (Microsporidian parasite).